The sequence spans 141 residues: Flagellar assembly factor FliW 1 (141 aa).

It belongs to the FliW family. As to quaternary structure, interacts with translational regulator CsrA and flagellin(s).

The protein localises to the cytoplasm. Its function is as follows. Acts as an anti-CsrA protein, binds CsrA and prevents it from repressing translation of its target genes, one of which is flagellin. Binds to flagellin and participates in the assembly of the flagellum. This chain is Flagellar assembly factor FliW 1, found in Desulfotalea psychrophila (strain LSv54 / DSM 12343).